A 376-amino-acid chain; its full sequence is T-box transcription factor 18 (376 aa).

A compositionally biased stretch (low complexity) spans 38-63 (STSRPSSSSPPSLPAVSSELLSSSFP). The disordered stretch occupies residues 38 to 76 (STSRPSSSSPPSLPAVSSELLSSSFPTNAPESSSRDLAP). A DNA-binding region (T-box) is located at residues 171–364 (LANQEQWAKF…GNKYCRTDRK (194 aa)).

The protein resides in the nucleus. Transcriptional regulator involved in developmental processes. Directly binds to the promoter region of the sex-determining factor xol-1 to activate its transcription. Its activation of xol-1 transcription controls sex determination and X chromosome dosage compensation to promote male development. Has a role in the fox-1-sex-1-mediated determination of sexual fate. The protein is T-box transcription factor 18 of Caenorhabditis elegans.